A 131-amino-acid chain; its full sequence is Small ribosomal subunit protein uS8 (131 aa).

Belongs to the universal ribosomal protein uS8 family. Part of the 30S ribosomal subunit. Contacts proteins S5 and S12.

In terms of biological role, one of the primary rRNA binding proteins, it binds directly to 16S rRNA central domain where it helps coordinate assembly of the platform of the 30S subunit. This chain is Small ribosomal subunit protein uS8, found in Novosphingobium aromaticivorans (strain ATCC 700278 / DSM 12444 / CCUG 56034 / CIP 105152 / NBRC 16084 / F199).